The primary structure comprises 377 residues: Bifunctional enzyme IspD/IspF (377 aa).

The interval 1-221 (MTTAAIIVAA…ERILRQDMDV (221 aa)) is 2-C-methyl-D-erythritol 4-phosphate cytidylyltransferase. Residues 222 to 377 (RLGNGYDVHR…ALATACLVKP (156 aa)) form a 2-C-methyl-D-erythritol 2,4-cyclodiphosphate synthase region. 2 residues coordinate a divalent metal cation: D228 and H230. Residues 228-230 (DVH) and 254-255 (HS) contribute to the 4-CDP-2-C-methyl-D-erythritol 2-phosphate site. Position 262 (H262) interacts with a divalent metal cation. 4-CDP-2-C-methyl-D-erythritol 2-phosphate contacts are provided by residues 276-278 (DIG), 352-355 (TTSE), F359, and R362.

The protein in the N-terminal section; belongs to the IspD/TarI cytidylyltransferase family. IspD subfamily. This sequence in the C-terminal section; belongs to the IspF family. A divalent metal cation is required as a cofactor.

It carries out the reaction 2-C-methyl-D-erythritol 4-phosphate + CTP + H(+) = 4-CDP-2-C-methyl-D-erythritol + diphosphate. It catalyses the reaction 4-CDP-2-C-methyl-D-erythritol 2-phosphate = 2-C-methyl-D-erythritol 2,4-cyclic diphosphate + CMP. The protein operates within isoprenoid biosynthesis; isopentenyl diphosphate biosynthesis via DXP pathway; isopentenyl diphosphate from 1-deoxy-D-xylulose 5-phosphate: step 2/6. It participates in isoprenoid biosynthesis; isopentenyl diphosphate biosynthesis via DXP pathway; isopentenyl diphosphate from 1-deoxy-D-xylulose 5-phosphate: step 4/6. Functionally, bifunctional enzyme that catalyzes the formation of 4-diphosphocytidyl-2-C-methyl-D-erythritol from CTP and 2-C-methyl-D-erythritol 4-phosphate (MEP) (IspD), and catalyzes the conversion of 4-diphosphocytidyl-2-C-methyl-D-erythritol 2-phosphate (CDP-ME2P) to 2-C-methyl-D-erythritol 2,4-cyclodiphosphate (ME-CPP) with a corresponding release of cytidine 5-monophosphate (CMP) (IspF). In Ruegeria pomeroyi (strain ATCC 700808 / DSM 15171 / DSS-3) (Silicibacter pomeroyi), this protein is Bifunctional enzyme IspD/IspF.